The sequence spans 284 residues: L-ribulose-5-phosphate 3-epimerase UlaE (284 aa).

This sequence belongs to the L-ribulose-5-phosphate 3-epimerase family.

It carries out the reaction L-ribulose 5-phosphate = L-xylulose 5-phosphate. Its pathway is cofactor degradation; L-ascorbate degradation; D-xylulose 5-phosphate from L-ascorbate: step 3/4. Its function is as follows. Catalyzes the isomerization of L-xylulose-5-phosphate to L-ribulose-5-phosphate. Is involved in the anaerobic L-ascorbate utilization. The sequence is that of L-ribulose-5-phosphate 3-epimerase UlaE from Salmonella dublin (strain CT_02021853).